A 37-amino-acid polypeptide reads, in one-letter code: MRVQPSVKKICRNCKIIRRHGIVRVICTDPRHKQKQG.

This sequence belongs to the bacterial ribosomal protein bL36 family.

The protein is Large ribosomal subunit protein bL36 of Laribacter hongkongensis (strain HLHK9).